The sequence spans 455 residues: MSGDILQTPDAPKPQGALDNYFKITARGSTVRQEVLAGLTTFLAMVYSVIVVPGMLGKAGFPPAAVFVATCLVAGFGSLLMGLWANLPMAIGCAISLTAFTAFSLVLGQQISVPVALGAVFLMGVIFTAISVTGVRTWILRNLPMGIAHGTGIGIGLFLLLIAANGVGMVIKNPIEGLPVALGAFTSFPVMMSLLGLAVIFGLEKCRVPGGILLVIIAISIIGLIFDPAVKYHGLVAMPSLTGEDGKSLIFSLDIMGALQPTVLPSVLALVMTAVFDATGTIRAVAGQANLLDKDNQIINGGKALTSDSVSSIFSGLVGAAPAAVYIESAAGTAAGGKTGLTATVVGALFLLILFLSPLSFLIPGYATAPALMYVGLLMLSNVSKLDFNDFIDAMAGLVCAVFIVLTCNIVTGIMLGFVTLVVGRVFAREWQKLNIGTVIITAALVAFYAGGWAI.

Residues 1–31 lie on the Cytoplasmic side of the membrane; the sequence is MSGDILQTPDAPKPQGALDNYFKITARGSTV. Residues 32–55 traverse the membrane as a helical segment; the sequence is RQEVLAGLTTFLAMVYSVIVVPGM. Over 56–65 the chain is Periplasmic; it reads LGKAGFPPAA. A helical transmembrane segment spans residues 66-84; sequence VFVATCLVAGFGSLLMGLW. At 85 to 86 the chain is on the cytoplasmic side; sequence AN. The discontinuously helical transmembrane segment at 87–103 threads the bilayer; the sequence is LPMAIGCAISLTAFTAF. Over 104–115 the chain is Periplasmic; the sequence is SLVLGQQISVPV. Residues 116-135 traverse the membrane as a helical segment; the sequence is ALGAVFLMGVIFTAISVTGV. Residues 136–147 lie on the Cytoplasmic side of the membrane; it reads RTWILRNLPMGI. A helical membrane pass occupies residues 148–168; it reads AHGTGIGIGLFLLLIAANGVG. Topologically, residues 169–186 are periplasmic; that stretch reads MVIKNPIEGLPVALGAFT. Residues 187–204 form a helical membrane-spanning segment; it reads SFPVMMSLLGLAVIFGLE. Residues 205–208 are Cytoplasmic-facing; sequence KCRV. Residues 209-228 form a helical membrane-spanning segment; the sequence is PGGILLVIIAISIIGLIFDP. Residues 229-260 lie on the Periplasmic side of the membrane; it reads AVKYHGLVAMPSLTGEDGKSLIFSLDIMGALQ. Residues 261 to 289 traverse the membrane as a helical segment; sequence PTVLPSVLALVMTAVFDATGTIRAVAGQA. Over 290–302 the chain is Cytoplasmic; the sequence is NLLDKDNQIINGG. The chain crosses the membrane as a helical span at residues 303-318; sequence KALTSDSVSSIFSGLV. Residues 319–320 lie on the Periplasmic side of the membrane; it reads GA. Residues 321–336 form a discontinuously helical membrane-spanning segment; that stretch reads APAAVYIESAAGTAAG. Topologically, residues 337-340 are cytoplasmic; the sequence is GKTG. Residues 341-355 traverse the membrane as a helical segment; sequence LTATVVGALFLLILF. Residues 356-366 lie on the Periplasmic side of the membrane; it reads LSPLSFLIPGY. A helical membrane pass occupies residues 367–386; that stretch reads ATAPALMYVGLLMLSNVSKL. Topologically, residues 387–391 are cytoplasmic; the sequence is DFNDF. An intramembrane region (discontinuously helical) is located at residues 392–427; the sequence is IDAMAGLVCAVFIVLTCNIVTGIMLGFVTLVVGRVF. At 428-455 the chain is on the cytoplasmic side; the sequence is AREWQKLNIGTVIITAALVAFYAGGWAI.

This sequence belongs to the nucleobase:cation symporter-2 (NCS2) (TC 2.A.40) family. Azg-like subfamily.

It localises to the cell membrane. High-affinity transporter for guanine and hypoxanthine. This chain is Guanine/hypoxanthine permease GhxQ (ghxQ), found in Escherichia coli (strain K12).